We begin with the raw amino-acid sequence, 60 residues long: Large ribosomal subunit protein bL32 (60 aa).

Positions 1 to 23 are disordered; it reads MAVPRNRHSNARKNIRRSHHAKK.

The protein belongs to the bacterial ribosomal protein bL32 family.

The sequence is that of Large ribosomal subunit protein bL32 from Chlamydia caviae (strain ATCC VR-813 / DSM 19441 / 03DC25 / GPIC) (Chlamydophila caviae).